The following is a 242-amino-acid chain: Probable transcriptional regulatory protein Cthe_2075 (242 aa).

It belongs to the TACO1 family.

It is found in the cytoplasm. This is Probable transcriptional regulatory protein Cthe_2075 from Acetivibrio thermocellus (strain ATCC 27405 / DSM 1237 / JCM 9322 / NBRC 103400 / NCIMB 10682 / NRRL B-4536 / VPI 7372) (Clostridium thermocellum).